Here is a 180-residue protein sequence, read N- to C-terminus: Ribulose bisphosphate carboxylase small subunit, chloroplastic 2 (180 aa).

Residues methionine 1 to glutamine 56 constitute a chloroplast transit peptide.

The protein belongs to the RuBisCO small chain family. As to quaternary structure, heterohexadecamer of 8 large and 8 small subunits.

The protein resides in the plastid. It is found in the chloroplast. In terms of biological role, ruBisCO catalyzes two reactions: the carboxylation of D-ribulose 1,5-bisphosphate, the primary event in carbon dioxide fixation, as well as the oxidative fragmentation of the pentose substrate. Both reactions occur simultaneously and in competition at the same active site. Although the small subunit is not catalytic it is essential for maximal activity. This is Ribulose bisphosphate carboxylase small subunit, chloroplastic 2 from Petunia hybrida (Petunia).